The following is a 162-amino-acid chain: uncharacterized protein (162 aa).

Transmembrane regions (helical) follow at residues 7-27, 51-71, and 134-154; these read LIAD…IVGL, LSIL…YMIG, and TYVA…ITIG.

It belongs to the DedA family.

The protein localises to the cell membrane. This is an uncharacterized protein from Bacillus subtilis (strain 168).